We begin with the raw amino-acid sequence, 276 residues long: Rhomboid protease GlpG (276 aa).

The next 6 membrane-spanning stretches (helical) occupy residues G94–I114, I142–G162, L169–Q189, F192–W212, L229–M249, and A250–L270. The active-site Nucleophile is the S201. The active site involves H254.

Belongs to the peptidase S54 family.

The protein localises to the cell inner membrane. It catalyses the reaction Cleaves type-1 transmembrane domains using a catalytic dyad composed of serine and histidine that are contributed by different transmembrane domains.. Rhomboid-type serine protease that catalyzes intramembrane proteolysis. The chain is Rhomboid protease GlpG from Salmonella typhi.